A 453-amino-acid polypeptide reads, in one-letter code: 3-phosphoshikimate 1-carboxyvinyltransferase (453 aa).

Positions 1–12 (MDVNVTSSTVRG) are enriched in polar residues. The segment at 1 to 21 (MDVNVTSSTVRGTTRAPPSKS) is disordered. The 3-phosphoshikimate site is built by lysine 20, serine 21, and arginine 25. A phosphoenolpyruvate-binding site is contributed by lysine 20. Phosphoenolpyruvate is bound by residues glycine 97 and arginine 125. Serine 170, serine 171, glutamine 172, serine 198, aspartate 330, and lysine 357 together coordinate 3-phosphoshikimate. Glutamine 172 contacts phosphoenolpyruvate. The active-site Proton acceptor is aspartate 330. Phosphoenolpyruvate-binding residues include arginine 361 and arginine 404.

Belongs to the EPSP synthase family. Monomer.

The protein localises to the cytoplasm. It carries out the reaction 3-phosphoshikimate + phosphoenolpyruvate = 5-O-(1-carboxyvinyl)-3-phosphoshikimate + phosphate. It functions in the pathway metabolic intermediate biosynthesis; chorismate biosynthesis. Catalyzes the transfer of the enolpyruvyl moiety of phosphoenolpyruvate (PEP) to the 5-hydroxyl of shikimate-3-phosphate (S3P) to produce enolpyruvyl shikimate-3-phosphate and inorganic phosphate. This is 3-phosphoshikimate 1-carboxyvinyltransferase from Halorubrum lacusprofundi (strain ATCC 49239 / DSM 5036 / JCM 8891 / ACAM 34).